Reading from the N-terminus, the 162-residue chain is Glutathione peroxidase-like peroxiredoxin GPX5 (162 aa).

Cys38 carries the post-translational modification S-selanylcysteine. Asn87 is an active-site residue.

This sequence belongs to the glutathione peroxidase family. Post-translationally, cys-87 is S-selanylated when selenium levels are high. S-selanylation may increase or be important for glutathione peroxidase activity.

Its subcellular location is the cytoplasm. The catalysed reaction is 2 glutathione + H2O2 = glutathione disulfide + 2 H2O. It carries out the reaction a hydroperoxide + [thioredoxin]-dithiol = an alcohol + [thioredoxin]-disulfide + H2O. Functionally, has thioredoxin peroxidase activity. May also have glutathione peroxidase activity, although this activity is controversial. Protects cells against reactive oxygen species, which may include photooxidative stress, hydrogen peroxide and organic hydroperoxides. The sequence is that of Glutathione peroxidase-like peroxiredoxin GPX5 from Chlamydomonas reinhardtii (Chlamydomonas smithii).